The sequence spans 95 residues: Scorpine-like peptide Smp76 (95 aa).

An N-terminal signal peptide occupies residues 1–19; it reads MNCKLTALLFLGLIVIASC. The region spanning 55–95 is the BetaSPN-type CS-alpha/beta domain; sequence EFQCVANVDTLGNCKKHCAKTTGEKGYCHGTKCKCGIELSY. Intrachain disulfides connect cysteine 58–cysteine 82, cysteine 68–cysteine 87, and cysteine 72–cysteine 89.

In terms of processing, disulfide bonds are critical for antiviral function, and their disruption inhibit viral activity. Expressed by the venom gland.

The protein localises to the secreted. Antibacterial peptide. Dose-dependently inhibits Dengue virus (DENV), Zika virus (ZIKV) and Hepatitis C virus (HCV) infections. Two mechanisms of action have been described by two different groups: one involving activity on extracellular particles, and the other regulating the immune system. On Dengue virus (DENV), Zika virus (ZIKV), suppress the established viral infection, similar to the effect of interferon (IFN)-beta. Mechanistically, upregulates the expression of IFN-beta by activating interferon regulatory transcription factor 3 (IRF3) phosphorylation. On HCV and DENV, acts by inactivating extra-cellular infectious particles without affecting viral replication. Shows very weak inhibition on measles virus. Is neither toxic nor hemolytic in vitro at high concentrations. The protein is Scorpine-like peptide Smp76 of Scorpio palmatus (Israeli golden scorpion).